The primary structure comprises 142 residues: Small ribosomal subunit protein uS12 (142 aa).

This sequence belongs to the universal ribosomal protein uS12 family. In terms of assembly, part of the 30S ribosomal subunit.

Functionally, with S4 and S5 plays an important role in translational accuracy. Located at the interface of the 30S and 50S subunits. The protein is Small ribosomal subunit protein uS12 of Thermoplasma acidophilum (strain ATCC 25905 / DSM 1728 / JCM 9062 / NBRC 15155 / AMRC-C165).